We begin with the raw amino-acid sequence, 2271 residues long: Serine-rich adhesin for platelets (2271 aa).

A signal peptide spans 1–89 (MSKRQKAFHD…VNMLHDQQAF (89 aa)). The segment at 90–230 (AASDAPLTSE…KTSTTSTSTA (141 aa)) is serine-rich repeat region 1, SRR1. Positions 100–111 (LNTQSETVGNQN) are enriched in polar residues. The segment at 100–229 (LNTQSETVGN…NKTSTTSTST (130 aa)) is disordered. Over residues 112 to 128 (STTIEASTSTADSTSVT) the composition is skewed to low complexity. The segment covering 129–140 (KNSSSVQTSNSD) has biased composition (polar residues). Positions 150-229 (VTSTTNSTSN…NKTSTTSTST (80 aa)) are enriched in low complexity. The non-repeat region (NRR) stretch occupies residues 231–751 (PVKLRTFSRL…TTFKYEVTRN (521 aa)). The tract at residues 245-491 (FASAATTTAV…QQVQFGTFEY (247 aa)) is L-lectin module. Residues Asp-365, Tyr-367, Asn-369, and Asp-382 each contribute to the Ca(2+) site. The segment at 492-571 (TESAVTQVRY…NAGQSVTYYF (80 aa)) is beta-grasp module. The cadherin-like module-1 stretch occupies residues 572–659 (TDVKAPTVTV…KSTTTFTINV (88 aa)). Residues Asp-573, Lys-575, Asp-601, Asn-602, Asp-645, Asp-661, Thr-663, Asp-690, Asn-691, and Asp-734 each coordinate Ca(2+). Residues 660-751 (VDTTAPTVTP…TTFKYEVTRN (92 aa)) form a cadherin-like module-2 region. Disordered regions lie at residues 751–791 (NSMS…VVST) and 806–2242 (SVSA…NGLL). Low complexity-rich tracts occupy residues 752–791 (SMSD…VVST), 806–1392 (SVSA…LSLS), and 1402–2214 (SNSA…ATSE). The tract at residues 752–2232 (SMSDSVSTSG…AQSEKRLPDT (1481 aa)) is serine-rich repeat region 2, SRR2. Residues 2229-2233 (LPDTG) carry the LPXTG sorting signal motif. The residue at position 2232 (Thr-2232) is a Pentaglycyl murein peptidoglycan amidated threonine. Positions 2233-2271 (GDSIKQNGLLGGVMTLLVGLGLMKRKKKKDENDQDDSQA) are cleaved as a propeptide — removed by sortase.

It belongs to the serine-rich repeat protein (SRRP) family. Proteolytically cleaved by a metalloprotease. Post-translationally, glycosylated. It is probable that most of the Ser residues in SSR1 and SSR2 are O-GlcNAcylated. Sequential glycosylation by sugar transferases are able to generate complex sugar polymorphisms.

The protein resides in the secreted. Its subcellular location is the cell wall. Mediates binding to human platelets, possibly through a receptor-ligand interaction. Probably associated with virulence in endovascular infection. Plays a positive role in biofilm formation, possibly by self-association via the non-repeat region (NRR or binding region, BR). Binds to and plays a role in human lung epithelial cell invasion via the L-lectin module of its NRR domain; N-acetylneuraminic acid (Neu5Ac) inhibits binding. Treatment of host cells with neuraminidase decreases adherence of S.aureus cells, suggesting SraP recognizes a host terminal Neu5Ac moiety as a receptor. This Staphylococcus aureus (strain NCTC 8325 / PS 47) protein is Serine-rich adhesin for platelets.